Consider the following 547-residue polypeptide: Probable protein kinase UbiB (547 aa).

Positions 121–501 constitute a Protein kinase domain; the sequence is EFSPDPMASA…QLRSERRWRR (381 aa). Residues 127–135 and K149 contribute to the ATP site; that span reads MASASVAQV. D284 (proton acceptor) is an active-site residue. Transmembrane regions (helical) follow at residues 502-522 and 523-543; these read GFIA…HAGQ and WLAD…GVML.

Belongs to the ABC1 family. UbiB subfamily.

Its subcellular location is the cell inner membrane. Its pathway is cofactor biosynthesis; ubiquinone biosynthesis [regulation]. Its function is as follows. Is probably a protein kinase regulator of UbiI activity which is involved in aerobic coenzyme Q (ubiquinone) biosynthesis. In Marinobacter nauticus (strain ATCC 700491 / DSM 11845 / VT8) (Marinobacter aquaeolei), this protein is Probable protein kinase UbiB.